A 170-amino-acid chain; its full sequence is Shikimate kinase (170 aa).

15–20 (GAGKTT) provides a ligand contact to ATP. Position 19 (Thr19) interacts with Mg(2+). Substrate contacts are provided by Asp37, Arg61, and Gly83. Arg121 contributes to the ATP binding site. Position 140 (Arg140) interacts with substrate.

Belongs to the shikimate kinase family. Monomer. Mg(2+) serves as cofactor.

The protein resides in the cytoplasm. It carries out the reaction shikimate + ATP = 3-phosphoshikimate + ADP + H(+). Its pathway is metabolic intermediate biosynthesis; chorismate biosynthesis; chorismate from D-erythrose 4-phosphate and phosphoenolpyruvate: step 5/7. In terms of biological role, catalyzes the specific phosphorylation of the 3-hydroxyl group of shikimic acid using ATP as a cosubstrate. In Neisseria meningitidis serogroup C (strain 053442), this protein is Shikimate kinase.